Reading from the N-terminus, the 540-residue chain is E3 ubiquitin-protein ligase rnf8-A (540 aa).

The 55-residue stretch at Val30 to Leu84 folds into the FHA domain. The interval Leu128–Ser205 is disordered. Composition is skewed to polar residues over residues Ala152–Ser162 and Ser179–Ser200. The RING-type zinc finger occupies Cys382–Arg420. Positions Gly517–Ile540 are disordered. A compositionally biased stretch (acidic residues) spans Asp519–Ile540.

It belongs to the RNF8 family. Homodimer. Forms a E2-E3 ubiquitin ligase complex composed of the rnf8 homodimer and a E2 heterodimer of ube2n and ube2v2.

The protein resides in the nucleus. It carries out the reaction S-ubiquitinyl-[E2 ubiquitin-conjugating enzyme]-L-cysteine + [acceptor protein]-L-lysine = [E2 ubiquitin-conjugating enzyme]-L-cysteine + N(6)-ubiquitinyl-[acceptor protein]-L-lysine.. It functions in the pathway protein modification; protein ubiquitination. Functionally, E3 ubiquitin-protein ligase that plays a key role in DNA damage signaling via 2 distinct roles: by mediating the 'Lys-63'-linked ubiquitination of histones H2A and H2AX and promoting the recruitment of DNA repair proteins at double-strand breaks (DSBs) sites, and by catalyzing 'Lys-48'-linked ubiquitination to remove target proteins from DNA damage sites. Following DNA DSBs, it is recruited to the sites of damage by ATM-phosphorylated mdc1 and catalyzes the 'Lys-63'-linked ubiquitination of histones H2A and H2AX, thereby promoting the formation of tp53bp1 and brca1 ionizing radiation-induced foci (IRIF). H2A ubiquitination also mediates the ATM-dependent transcriptional silencing at regions flanking DSBs in cis, a mechanism to avoid collision between transcription and repair intermediates. Also catalyzes the formation of 'Lys-48'-linked polyubiquitin chains, leading to degradation of substrate proteins. In addition to its function in damage signaling, also plays a role in higher-order chromatin structure by mediating extensive chromatin decondensation. This is E3 ubiquitin-protein ligase rnf8-A from Xenopus laevis (African clawed frog).